Here is a 215-residue protein sequence, read N- to C-terminus: MKFFIDTANIDEIKDALAMGMVDGVTTNPSLIAKEAGEFTDIIREICSIVEGPVSAEVISLDYDGMVKEARDLAKIADNIVVKIPMTVDGLKAVRTLTNEGIKTNVTLIFSATQALMAAKAGATYASPFVGRIDDLALDGMNLIEEIAEIYSNYMFDTQIIVASVRNPLHVLNSALIGADIATIPHKVLSALASHPLTDRGIESFMADWKKKENK.

Catalysis depends on Lys83, which acts as the Schiff-base intermediate with substrate.

The protein belongs to the transaldolase family. Type 3B subfamily.

It is found in the cytoplasm. The enzyme catalyses D-sedoheptulose 7-phosphate + D-glyceraldehyde 3-phosphate = D-erythrose 4-phosphate + beta-D-fructose 6-phosphate. It participates in carbohydrate degradation; pentose phosphate pathway; D-glyceraldehyde 3-phosphate and beta-D-fructose 6-phosphate from D-ribose 5-phosphate and D-xylulose 5-phosphate (non-oxidative stage): step 2/3. In terms of biological role, transaldolase is important for the balance of metabolites in the pentose-phosphate pathway. In Desulforapulum autotrophicum (strain ATCC 43914 / DSM 3382 / VKM B-1955 / HRM2) (Desulfobacterium autotrophicum), this protein is Probable transaldolase.